Here is a 179-residue protein sequence, read N- to C-terminus: Adenine phosphoribosyltransferase (179 aa).

This sequence belongs to the purine/pyrimidine phosphoribosyltransferase family. In terms of assembly, homodimer.

It is found in the cytoplasm. The catalysed reaction is AMP + diphosphate = 5-phospho-alpha-D-ribose 1-diphosphate + adenine. It participates in purine metabolism; AMP biosynthesis via salvage pathway; AMP from adenine: step 1/1. Catalyzes a salvage reaction resulting in the formation of AMP, that is energically less costly than de novo synthesis. This Beijerinckia indica subsp. indica (strain ATCC 9039 / DSM 1715 / NCIMB 8712) protein is Adenine phosphoribosyltransferase.